Reading from the N-terminus, the 267-residue chain is Methylglyoxal reductase DkgB (267 aa).

Tyrosine 39 serves as the catalytic Proton donor. Residue histidine 97 participates in substrate binding. An NADP(+)-binding site is contributed by 179 to 231 (MTLAYGKALKDEVIARIAAKHNATPAQVILAWAMGEGYSVIPSSTRRENLASS).

The protein belongs to the aldo/keto reductase family. Monomer.

Its subcellular location is the cytoplasm. It carries out the reaction hydroxyacetone + NADP(+) = methylglyoxal + NADPH + H(+). In terms of biological role, aldo-keto reductase that significantly contributes to cellular methylglyoxal detoxification by catalyzing the NADPH-dependent conversion of methylglyoxal to acetol. The chain is Methylglyoxal reductase DkgB from Salmonella typhimurium (strain LT2 / SGSC1412 / ATCC 700720).